The following is a 268-amino-acid chain: Proenkephalin-A (268 aa).

A signal peptide spans 1 to 24 (MARFLRLCTWLLVLGSCLLATVQA). Intrachain disulfides connect Cys-26-Cys-48, Cys-30-Cys-52, and Cys-33-Cys-65. The tract at residues 162–185 (GTGDNRAREGRHQESTDNDDNMSK) is disordered. Residues 166 to 176 (NRAREGRHQES) are compositionally biased toward basic and acidic residues. 2 propeptides span residues 197-208 (SPQVEDEAKELQ) and 218-228 (VGRPEWWMDYQ). A Phosphoserine modification is found at Ser-252.

Belongs to the opioid neuropeptide precursor family. Proenkephalin-A is cleaved by CTSL to generate Met-enkephalin. Post-translationally, processed and degraded by ACE. In terms of processing, probably cleaved by ACE. Processed by ACE to generate Met-enkephalin in the nucleus accumbens of the brain. Post-translationally, the N-terminal domain contains 6 conserved cysteines thought to be involved in disulfide bonding and/or processing.

The protein localises to the cytoplasmic vesicle. Its subcellular location is the secretory vesicle. It is found in the chromaffin granule lumen. It localises to the secreted. Functionally, neuropeptide that competes with and mimic the effects of opiate drugs. They play a role in a number of physiologic functions, including pain perception and responses to stress. Its function is as follows. Met-enkephalin-Arg-Phe neuropeptide acts as a strong ligand of Mu-type opioid receptor OPRM1. Met-enkephalin-Arg-Phe-binding to OPRM1 in the nucleus accumbens of the brain increases activation of OPRM1, leading to long-term synaptic depression of glutamate release. In terms of biological role, increases glutamate release in the striatum and decreases GABA concentration in the striatum. Increases glutamate release in the striatum. The protein is Proenkephalin-A (PENK) of Mesocricetus auratus (Golden hamster).